The primary structure comprises 367 residues: Developmentally-regulated GTP-binding protein 1 (367 aa).

Residues 2–16 are required for interaction with STK16; it reads SGTLARIAEIEAEMA. In terms of domain architecture, OBG-type G spans 65–290; sequence ARIGFVGFPS…LLEKIWDYLQ (226 aa). Residues 71-78, 96-100, 117-120, 248-251, and 271-273 contribute to the GTP site; these read GFPSVGKS, FTTLT, DLPG, NKID, and SAH. Positions 78 and 98 each coordinate Mg(2+). Residues 290–366 enclose the TGS domain; that stretch reads QLVRIYTKPK…EDEDVIQIVK (77 aa).

This sequence belongs to the TRAFAC class OBG-HflX-like GTPase superfamily. OBG GTPase family. It depends on Mg(2+) as a cofactor. K(+) is required as a cofactor. Expressed in many adult amd embryonic tissues. In adults, highest levels in ovaries and testes, followed by skeletal muscle, stomach, brain, kidney and liver. Weak expression in heart and brain.

The protein localises to the nucleus. It localises to the cytoplasm. It carries out the reaction GTP + H2O = GDP + phosphate + H(+). In terms of biological role, catalyzes the conversion of GTP to GDP through hydrolysis of the gamma-phosphate bond in GTP. Binds to microtubules and promotes microtubule polymerization and bundling. GTPase activity is not necessary for these microtubule-related functions. The protein is Developmentally-regulated GTP-binding protein 1 (drg1) of Xenopus laevis (African clawed frog).